The primary structure comprises 341 residues: Thymidine kinase (341 aa).

19–26 (GAYGIGKT) lines the ATP pocket. Catalysis depends on glutamate 48, which acts as the Proton acceptor. 2 residues coordinate substrate: tyrosine 66 and glutamine 90. Arginine 183 provides a ligand contact to ATP. Arginine 189 contacts substrate.

Belongs to the herpesviridae thymidine kinase family. Homodimer.

It carries out the reaction thymidine + ATP = dTMP + ADP + H(+). Its function is as follows. Catalyzes the transfer of the gamma-phospho group of ATP to thymidine to generate dTMP in the salvage pathway of pyrimidine synthesis. The dTMP serves as a substrate for DNA polymerase during viral DNA replication. Allows the virus to be reactivated and to grow in non-proliferative cells lacking a high concentration of phosphorylated nucleic acid precursors. The sequence is that of Thymidine kinase from Varicella-zoster virus (strain Oka vaccine) (HHV-3).